Reading from the N-terminus, the 353-residue chain is Chorismate synthase (353 aa).

Arg-48 contributes to the NADP(+) binding site. FMN contacts are provided by residues 125-127, 238-239, Gly-278, 293-297, and Arg-319; these read RSS, NA, and KPTSS.

It belongs to the chorismate synthase family. As to quaternary structure, homotetramer. It depends on FMNH2 as a cofactor.

It carries out the reaction 5-O-(1-carboxyvinyl)-3-phosphoshikimate = chorismate + phosphate. It participates in metabolic intermediate biosynthesis; chorismate biosynthesis; chorismate from D-erythrose 4-phosphate and phosphoenolpyruvate: step 7/7. Functionally, catalyzes the anti-1,4-elimination of the C-3 phosphate and the C-6 proR hydrogen from 5-enolpyruvylshikimate-3-phosphate (EPSP) to yield chorismate, which is the branch point compound that serves as the starting substrate for the three terminal pathways of aromatic amino acid biosynthesis. This reaction introduces a second double bond into the aromatic ring system. This chain is Chorismate synthase, found in Buchnera aphidicola subsp. Cinara cedri (strain Cc).